Here is a 643-residue protein sequence, read N- to C-terminus: Threonine--tRNA ligase (643 aa).

One can recognise a TGS domain in the interval 1–61; that stretch reads MIKITLKDGS…NEDSSLEICT (61 aa). The interval 240–540 is catalytic; that stretch reads DHNKLGRELG…LIEKYAGALP (301 aa). 3 residues coordinate Zn(2+): Cys-335, His-386, and His-517.

It belongs to the class-II aminoacyl-tRNA synthetase family. Homodimer. Zn(2+) is required as a cofactor.

It is found in the cytoplasm. It carries out the reaction tRNA(Thr) + L-threonine + ATP = L-threonyl-tRNA(Thr) + AMP + diphosphate + H(+). Functionally, catalyzes the attachment of threonine to tRNA(Thr) in a two-step reaction: L-threonine is first activated by ATP to form Thr-AMP and then transferred to the acceptor end of tRNA(Thr). Also edits incorrectly charged L-seryl-tRNA(Thr). The polypeptide is Threonine--tRNA ligase (Clostridium perfringens (strain ATCC 13124 / DSM 756 / JCM 1290 / NCIMB 6125 / NCTC 8237 / Type A)).